Here is a 71-residue protein sequence, read N- to C-terminus: Vitellogenin-B1 (71 aa).

The N-terminal stretch at 1-15 (MRGIILAQLLALAGS) is a signal peptide. In terms of domain architecture, Vitellogenin spans 24–71 (FSESKPYVYNYEGIILNGIPENGLARSGIKLNCKAEISGYAQRSYMLK).

As to expression, produced by the liver, secreted into the blood and then sequestered by receptor mediated endocytosis into growing oocytes, where it is generally cleaved, giving rise to the respective yolk components.

In terms of biological role, precursor of the major egg-yolk proteins that are sources of nutrients during early development of oviparous organisms. The sequence is that of Vitellogenin-B1 from Xenopus laevis (African clawed frog).